The chain runs to 872 residues: Alanine--tRNA ligase (872 aa).

Positions 567, 571, 669, and 673 each coordinate Zn(2+).

This sequence belongs to the class-II aminoacyl-tRNA synthetase family. Zn(2+) serves as cofactor.

Its subcellular location is the cytoplasm. The catalysed reaction is tRNA(Ala) + L-alanine + ATP = L-alanyl-tRNA(Ala) + AMP + diphosphate. Functionally, catalyzes the attachment of alanine to tRNA(Ala) in a two-step reaction: alanine is first activated by ATP to form Ala-AMP and then transferred to the acceptor end of tRNA(Ala). Also edits incorrectly charged Ser-tRNA(Ala) and Gly-tRNA(Ala) via its editing domain. This Streptococcus agalactiae serotype III (strain NEM316) protein is Alanine--tRNA ligase.